The chain runs to 239 residues: Venom nerve growth factor (239 aa).

An N-terminal signal peptide occupies residues 1–18 (MSMLCYTLIIAFLIGIWA). The propeptide occupies 19–125 (APKSEDNVPL…ALNRNIQAKR (107 aa)). The span at 47 to 66 (GLKTSRNTDQRHPAPKKADD) shows a compositional bias: basic and acidic residues. The tract at residues 47–68 (GLKTSRNTDQRHPAPKKADDQE) is disordered. Cystine bridges form between C139–C203, C181–C231, and C191–C233.

Belongs to the NGF-beta family. Homodimer; non-covalently linked. In terms of tissue distribution, expressed by the venom gland.

It localises to the secreted. Functionally, nerve growth factor is important for the development and maintenance of the sympathetic and sensory nervous systems. It stimulates division and differentiation of sympathetic and embryonic sensory neurons as well as basal forebrain cholinergic neurons in the brain. Its relevance in the snake venom is not clear. However, it has been shown to inhibit metalloproteinase-dependent proteolysis of platelet glycoprotein Ib alpha, suggesting a metalloproteinase inhibition to prevent metalloprotease autodigestion and/or protection against prey proteases. Binds a lipid between the two protein chains in the homodimer. The lipid-bound form promotes histamine relase from mouse mast cells, contrary to the lipid-free form. This is Venom nerve growth factor from Pseudechis porphyriacus (Red-bellied black snake).